We begin with the raw amino-acid sequence, 126 residues long: Protein ApaG (126 aa).

Residues 2 to 126 enclose the ApaG domain; it reads TELETSIKID…FRLSIPGLLH (125 aa).

This Shewanella woodyi (strain ATCC 51908 / MS32) protein is Protein ApaG.